A 168-amino-acid chain; its full sequence is Endoribonuclease YbeY (168 aa).

Residues His126, His130, and His136 each contribute to the Zn(2+) site.

The protein belongs to the endoribonuclease YbeY family. Zn(2+) serves as cofactor.

The protein resides in the cytoplasm. Its function is as follows. Single strand-specific metallo-endoribonuclease involved in late-stage 70S ribosome quality control and in maturation of the 3' terminus of the 16S rRNA. This Sinorhizobium medicae (strain WSM419) (Ensifer medicae) protein is Endoribonuclease YbeY.